The chain runs to 233 residues: Favin (233 aa).

Residues Glu120 and Asp122 each contribute to the Mn(2+) site. Residues Asp122, Phe124, Asn126, and Asp130 each contribute to the Ca(2+) site. The Mn(2+) site is built by Asp130 and His137. Asn168 carries N-linked (GlcNAc...) asparagine glycosylation.

This sequence belongs to the leguminous lectin family. Heterodimer of an alpha and a beta chain.

The protein is Favin of Vicia faba (Broad bean).